The sequence spans 130 residues: Small ribosomal subunit protein uS9 (130 aa).

Belongs to the universal ribosomal protein uS9 family.

The polypeptide is Small ribosomal subunit protein uS9 (rpsI) (Shigella flexneri).